The following is a 474-amino-acid chain: tRNA-2-methylthio-N(6)-dimethylallyladenosine synthase (474 aa).

The MTTase N-terminal domain occupies 3–120 (KKLHIKTWGC…LPEMIEQVRR (118 aa)). The [4Fe-4S] cluster site is built by cysteine 12, cysteine 49, cysteine 83, cysteine 157, cysteine 161, and cysteine 164. Positions 143–375 (RAEGPTAFVS…QDRITQQAMR (233 aa)) constitute a Radical SAM core domain. One can recognise a TRAM domain in the interval 378–441 (RHMMGTVQRI…TNSLRGVFIR (64 aa)).

The protein belongs to the methylthiotransferase family. MiaB subfamily. Monomer. [4Fe-4S] cluster serves as cofactor.

The protein localises to the cytoplasm. The catalysed reaction is N(6)-dimethylallyladenosine(37) in tRNA + (sulfur carrier)-SH + AH2 + 2 S-adenosyl-L-methionine = 2-methylsulfanyl-N(6)-dimethylallyladenosine(37) in tRNA + (sulfur carrier)-H + 5'-deoxyadenosine + L-methionine + A + S-adenosyl-L-homocysteine + 2 H(+). In terms of biological role, catalyzes the methylthiolation of N6-(dimethylallyl)adenosine (i(6)A), leading to the formation of 2-methylthio-N6-(dimethylallyl)adenosine (ms(2)i(6)A) at position 37 in tRNAs that read codons beginning with uridine. The polypeptide is tRNA-2-methylthio-N(6)-dimethylallyladenosine synthase (Shewanella baltica (strain OS185)).